We begin with the raw amino-acid sequence, 480 residues long: UDP-glycosyltransferase 71C5 (480 aa).

Residues Ser-290, 349 to 351, 366 to 374, and 388 to 391 contribute to the UDP-alpha-D-glucose site; these read APQ, HCGWNSVQE, and YAEQ.

It belongs to the UDP-glycosyltransferase family.

In terms of biological role, possesses low quercetin 3-O-glucosyltransferase activity in vitro. In Arabidopsis thaliana (Mouse-ear cress), this protein is UDP-glycosyltransferase 71C5 (UGT71C5).